A 257-amino-acid polypeptide reads, in one-letter code: Uridylate kinase (257 aa).

8-11 (KLSG) is an ATP binding site. Residues 21–26 (GSAGFG) are involved in allosteric activation by GTP. Position 56 (Gly56) interacts with UMP. Residues Gly57 and Arg61 each contribute to the ATP site. Residues Asp75 and 136 to 143 (NGAPFFTT) contribute to the UMP site. Positions 164, 170, and 173 each coordinate ATP.

The protein belongs to the UMP kinase family. Homohexamer.

The protein resides in the cytoplasm. The catalysed reaction is UMP + ATP = UDP + ADP. It participates in pyrimidine metabolism; CTP biosynthesis via de novo pathway; UDP from UMP (UMPK route): step 1/1. Allosterically activated by GTP. Inhibited by UTP. Its function is as follows. Catalyzes the reversible phosphorylation of UMP to UDP. This Deinococcus geothermalis (strain DSM 11300 / CIP 105573 / AG-3a) protein is Uridylate kinase.